The sequence spans 81 residues: Cytotoxin 1a (81 aa).

The signal sequence occupies residues 1–21; that stretch reads MKTLLLTLVVVTIVCLDLGYT. Disulfide bonds link Cys-24–Cys-42, Cys-35–Cys-59, Cys-63–Cys-74, and Cys-75–Cys-80.

The protein belongs to the three-finger toxin family. Short-chain subfamily. Type IA cytotoxin sub-subfamily. Monomer in solution; Homodimer and oligomer in the presence of negatively charged lipids forming a pore with a size ranging between 20 and 30 Angstroms. Expressed by the venom gland.

It is found in the secreted. It localises to the target cell membrane. In terms of biological role, shows cytolytic activity on many different cells by forming pore in lipid membranes. In vivo, increases heart rate or kills the animal by cardiac arrest. In addition, it binds to heparin with high affinity, interacts with Kv channel-interacting protein 1 (KCNIP1) in a calcium-independent manner, and binds to integrin alpha-V/beta-3 (ITGAV/ITGB3) with moderate affinity. In Naja atra (Chinese cobra), this protein is Cytotoxin 1a.